Consider the following 261-residue polypeptide: uncharacterized protein (261 aa).

The tract at residues methionine 1–alanine 22 is disordered. A helical transmembrane segment spans residues isoleucine 107–valine 127.

This sequence to M.tuberculosis Rv1362c.

Its subcellular location is the membrane. This is an uncharacterized protein from Mycobacterium tuberculosis (strain ATCC 25618 / H37Rv).